Consider the following 381-residue polypeptide: Chorismate synthase (381 aa).

R41 and R47 together coordinate NADP(+). FMN contacts are provided by residues R127 to S129, Q247 to A248, G291, K306 to T310, and R332.

This sequence belongs to the chorismate synthase family. As to quaternary structure, homotetramer. FMNH2 is required as a cofactor.

It catalyses the reaction 5-O-(1-carboxyvinyl)-3-phosphoshikimate = chorismate + phosphate. The protein operates within metabolic intermediate biosynthesis; chorismate biosynthesis; chorismate from D-erythrose 4-phosphate and phosphoenolpyruvate: step 7/7. Functionally, catalyzes the anti-1,4-elimination of the C-3 phosphate and the C-6 proR hydrogen from 5-enolpyruvylshikimate-3-phosphate (EPSP) to yield chorismate, which is the branch point compound that serves as the starting substrate for the three terminal pathways of aromatic amino acid biosynthesis. This reaction introduces a second double bond into the aromatic ring system. In Anaeromyxobacter sp. (strain K), this protein is Chorismate synthase.